Here is a 261-residue protein sequence, read N- to C-terminus: Carnitinyl-CoA dehydratase (261 aa).

The Nucleophile role is filled by E111. Catalysis depends on E131, which acts as the Proton acceptor.

This sequence belongs to the enoyl-CoA hydratase/isomerase family.

It catalyses the reaction (R)-carnitinyl-CoA = crotonobetainyl-CoA + H2O. Its pathway is amine and polyamine metabolism; carnitine metabolism. Catalyzes the reversible dehydration of L-carnitinyl-CoA to crotonobetainyl-CoA. In Shigella flexneri, this protein is Carnitinyl-CoA dehydratase.